The chain runs to 90 residues: Acylphosphatase (90 aa).

The region spanning 3–90 (QRQFTVYGCV…RVFSDFTIER (88 aa)) is the Acylphosphatase-like domain. Active-site residues include Arg18 and Asn36.

The protein belongs to the acylphosphatase family.

It catalyses the reaction an acyl phosphate + H2O = a carboxylate + phosphate + H(+). The protein is Acylphosphatase (acyP) of Actinobacillus succinogenes (strain ATCC 55618 / DSM 22257 / CCUG 43843 / 130Z).